Consider the following 551-residue polypeptide: Probable CoA ligase CCL5 (551 aa).

Residues Ser204–Lys212, Gln345–Thr350, Asp431, Val443–Arg446, and Lys537 each bind ATP. The tract at residues Glu274 to Gln345 is SBD1. The tract at residues Gly346–Tyr410 is SBD2.

The protein belongs to the ATP-dependent AMP-binding enzyme family. Mostly expressed at low levels in glandular trichomes (lupulin glands) after flowering, and, to a lower extent, in stems, leaves, cones and flowers.

The protein resides in the cytoplasm. Its subcellular location is the cytosol. The protein is Probable CoA ligase CCL5 of Humulus lupulus (European hop).